The chain runs to 188 residues: Elongation factor P-like protein (188 aa).

Belongs to the elongation factor P family.

The protein is Elongation factor P-like protein of Vibrio campbellii (strain ATCC BAA-1116).